The sequence spans 226 residues: Elongation factor G (226 aa).

The protein belongs to the GTP-binding elongation factor family. EF-G/EF-2 subfamily.

Its subcellular location is the cytoplasm. Catalyzes the GTP-dependent ribosomal translocation step during translation elongation. During this step, the ribosome changes from the pre-translocational (PRE) to the post-translocational (POST) state as the newly formed A-site-bound peptidyl-tRNA and P-site-bound deacylated tRNA move to the P and E sites, respectively. Catalyzes the coordinated movement of the two tRNA molecules, the mRNA and conformational changes in the ribosome. The sequence is that of Elongation factor G (fusA) from Neisseria gonorrhoeae.